Reading from the N-terminus, the 488-residue chain is Glutamyl-tRNA(Gln) amidotransferase subunit A (488 aa).

Catalysis depends on charge relay system residues K77 and S152. Catalysis depends on S176, which acts as the Acyl-ester intermediate.

This sequence belongs to the amidase family. GatA subfamily. In terms of assembly, heterotrimer of A, B and C subunits.

The enzyme catalyses L-glutamyl-tRNA(Gln) + L-glutamine + ATP + H2O = L-glutaminyl-tRNA(Gln) + L-glutamate + ADP + phosphate + H(+). Functionally, allows the formation of correctly charged Gln-tRNA(Gln) through the transamidation of misacylated Glu-tRNA(Gln) in organisms which lack glutaminyl-tRNA synthetase. The reaction takes place in the presence of glutamine and ATP through an activated gamma-phospho-Glu-tRNA(Gln). The chain is Glutamyl-tRNA(Gln) amidotransferase subunit A from Streptococcus pneumoniae (strain ATCC 700669 / Spain 23F-1).